A 108-amino-acid polypeptide reads, in one-letter code: Tyrosine-protein phosphatase 5 (108 aa).

Residues 1–108 (QESTVIVMLT…QGNNPSPIIV (108 aa)) enclose the Tyrosine-protein phosphatase domain. Asp-78 is a binding site for substrate.

This sequence belongs to the protein-tyrosine phosphatase family.

The enzyme catalyses O-phospho-L-tyrosyl-[protein] + H2O = L-tyrosyl-[protein] + phosphate. The chain is Tyrosine-protein phosphatase 5 (STY-5) from Styela plicata (Wrinkled sea squirt).